A 396-amino-acid polypeptide reads, in one-letter code: Putative nickel insertion protein (396 aa).

Belongs to the LarC family.

The chain is Putative nickel insertion protein from Wolinella succinogenes (strain ATCC 29543 / DSM 1740 / CCUG 13145 / JCM 31913 / LMG 7466 / NCTC 11488 / FDC 602W) (Vibrio succinogenes).